A 481-amino-acid polypeptide reads, in one-letter code: Extracellular exo-alpha-(1-&gt;5)-L-arabinofuranosidase (481 aa).

The signal sequence occupies residues 1–27 (MRRLTVRLFTAVLAALALLTMGTPAHA). Positions 37–336 (FTNPLAEKRA…KVYWNADGTP (300 aa)) are catalytic. Asp-47 serves as the catalytic Proton acceptor. Asn-186 is a substrate binding site. The Proton donor role is filled by Glu-223. Substrate is bound by residues His-287, Arg-321, 363–366 (HWDF), Asp-379, 457–460 (HYEN), and Asp-475. The tract at residues 349–479 (VRFSSYNYPD…ALDRQDATFY (131 aa)) is ABD.

It belongs to the glycosyl hydrolase 43 family.

It localises to the secreted. It catalyses the reaction Hydrolysis of terminal non-reducing alpha-L-arabinofuranoside residues in alpha-L-arabinosides.. It functions in the pathway glycan metabolism; L-arabinan degradation. Involved in the degradation of arabinan and is a key enzyme in the complete degradation of the plant cell wall. Catalyzes only the cleavage of terminal alpha-(1-&gt;5) arabinofuranosyl bonds of arabinan present in the arabinofuranosyl polysaccharides or oligosaccharides. It cannot act on other arabinose-containing polysaccharides and arabinoxylo-oligosaccharides. The sequence is that of Extracellular exo-alpha-(1-&gt;5)-L-arabinofuranosidase from Streptomyces avermitilis (strain ATCC 31267 / DSM 46492 / JCM 5070 / NBRC 14893 / NCIMB 12804 / NRRL 8165 / MA-4680).